A 68-amino-acid chain; its full sequence is DNA-directed RNA polymerase subunit omega (68 aa).

The protein belongs to the RNA polymerase subunit omega family. In terms of assembly, the RNAP catalytic core consists of 2 alpha, 1 beta, 1 beta' and 1 omega subunit. When a sigma factor is associated with the core the holoenzyme is formed, which can initiate transcription.

It catalyses the reaction RNA(n) + a ribonucleoside 5'-triphosphate = RNA(n+1) + diphosphate. In terms of biological role, promotes RNA polymerase assembly. Latches the N- and C-terminal regions of the beta' subunit thereby facilitating its interaction with the beta and alpha subunits. The chain is DNA-directed RNA polymerase subunit omega from Nitrosospira multiformis (strain ATCC 25196 / NCIMB 11849 / C 71).